Here is a 130-residue protein sequence, read N- to C-terminus: Glycine cleavage system H protein (130 aa).

The Lipoyl-binding domain maps to 25–106 (MALIGISDFA…PFDSWMIKVK (82 aa)). The residue at position 66 (lysine 66) is an N6-lipoyllysine.

The protein belongs to the GcvH family. As to quaternary structure, the glycine cleavage system is composed of four proteins: P, T, L and H. (R)-lipoate serves as cofactor.

Its function is as follows. The glycine cleavage system catalyzes the degradation of glycine. The H protein shuttles the methylamine group of glycine from the P protein to the T protein. This is Glycine cleavage system H protein from Leptospira interrogans serogroup Icterohaemorrhagiae serovar copenhageni (strain Fiocruz L1-130).